The sequence spans 1207 residues: MTNPTEHTLPSNSILESREGEFGCTVMDLRKLMELRSSDAIDQINVHYGGVMNLCSRLKTNPVEGLSGNPADLEKRKQVFGQNLIPPKKPKTFLELVWEALQDVTLIILEIAAIISLVLSFYRPPGGENEQCGLAVTSPEDEGEAEAGWIEGAAILFSVIIVVLVTAFNDWSKEKQFRGLQNRIEKEQKFSVIRNGHIIQLPVAEIVVGDIAQIKYGDLLPADGILIQGNDLKIDESSLTGESDHVKKSLERDPMLLSGTHVMEGSGRMVVTAVGINSQTGIIFTLLGASEGEEEEKKKKGKKQGVPENRNKAKTQDGVALEIQPLNSQEGIDSEEKEKKAAKLPKKEKSVLQGKLTRLAVQIGKAGLIMSAITVLILILYFVIDNFVIQRRPWLAECTPIYVQYFVKFFIIGVTVLVVAVPEGLPLAVTISLAYSVKKMMKDNNLVRHLDACETMGNATAICSDKTGTLTMNRMSVVQAYIGDTRYHQIPSPDDLVPKVLDLIVNGISINSAYTSKILPPEKEGGLPRQVGNKTECALLGFVSDLKQDYHAVRSEVPEEKLYKVYTFNSVRKSMSTVIEKPGGGYRMYSKGASEIILRKCNRILDKKGEAVPFKNKDRDEMVRTVIEPMACEGLRTLCIAYRDFNDGEPPWDNESEILTELTCIAVVGIEDPVRPEVPEAIAKCKRAGITVRMVTGDNINTARAIATKCGIVTPGDDFLCLEGKEFNRLIRNEKGEVEQEKLDKIWPKLRVLARSSPTDKHTLVKGIIDSTVGDQRQVVAVTGDGTNDGPALKKADVGFAMGIAGTDVAKEASDIILTDDNFTSIVKAVMWGRNVYDSISKFLQFQLTVNVVAVIVAFTGACITQDSPLKAVQMLWVNLIMDTFASLALATEPPTDSLLKRRPYGRNKPLISRTMMKNILGHAVYQLTVIFFLVFAGEKFFDIDSGRRAPLHSPPSQHYTIIFNTFVLMQLFNEINSRKIHGERNVFSGIFRNLIFCSVVLGTFISQIIIVEFGGKPFSCTKLTLSQWFWCLFIGIGELLWGQVISTIPTQSLKFLKEAGHGTTKEEITKDAEGLDEIDHAEMELRRGQILWFRGLNRIQTQIKVVKAFHSSLHESIQKPKNQNSIHNFMTHPEFTIDEEGPRTPLLDEQEEEIFEKVSKPGTKTSSLDGEVTPQTNKNNNTVDCCQVQIVASHSDSPLHSLETSV.

At M1–A100 the chain is on the cytoplasmic side. Phosphoserine is present on S13. Residues L101–F121 traverse the membrane as a helical segment. Residues Y122–A147 lie on the Extracellular side of the membrane. Residues G148–F168 form a helical membrane-spanning segment. Topologically, residues N169–L368 are cytoplasmic. Positions E294–D317 are disordered. S328 and S334 each carry phosphoserine. Residues I369–I389 traverse the membrane as a helical segment. Residues Q390–K408 lie on the Extracellular side of the membrane. The helical transmembrane segment at F409 to V429 threads the bilayer. Topologically, residues T430–F843 are cytoplasmic. The 4-aspartylphosphate intermediate role is filled by D465. Residues D785 and D789 each contribute to the Mg(2+) site. A helical transmembrane segment spans residues L844–I864. The Extracellular portion of the chain corresponds to T865 to K871. A helical transmembrane segment spans residues A872–T892. Topologically, residues E893–K918 are cytoplasmic. The helical transmembrane segment at N919–E939 threads the bilayer. Over K940–S957 the chain is Extracellular. Residues Q958–N977 traverse the membrane as a helical segment. Topologically, residues S978–N994 are cytoplasmic. The chain crosses the membrane as a helical span at residues L995 to G1015. Topologically, residues G1016–Q1028 are extracellular. The chain crosses the membrane as a helical span at residues W1029–I1049. Topologically, residues P1050–V1207 are cytoplasmic. Residues L1086–Q1103 are calmodulin-binding subdomain A. Phosphothreonine; by PKC is present on T1102. The interval I1104–S1113 is calmodulin-binding subdomain B. The interval V1159 to N1181 is disordered. The span at G1163–N1181 shows a compositional bias: polar residues.

The protein belongs to the cation transport ATPase (P-type) (TC 3.A.3) family. Type IIB subfamily. As to quaternary structure, interacts with PDZD11. Interacts with SLC35G1 and STIM1. Interacts with calmodulin. Isoform 1 is detected in brain, heart, liver, testis and epididymis. Isoform 2 is detected in brain (at protein level), heart, seminal vesicle and epididymis. There is a shift in expression from isoform 1 to isoform 2 along the length of the epididymis from caput to cauda (at protein level).

It localises to the cell membrane. It is found in the cell projection. The protein localises to the cilium. Its subcellular location is the flagellum membrane. It catalyses the reaction Ca(2+)(in) + ATP + H2O = Ca(2+)(out) + ADP + phosphate + H(+). Its activity is regulated as follows. Activated by calcium/calmodulin. In terms of biological role, calcium/calmodulin-regulated and magnesium-dependent enzyme that catalyzes the hydrolysis of ATP coupled with the transport of calcium out of the cell. By regulating sperm cells calcium homeostasis, may play a role in sperm motility. This is Plasma membrane calcium-transporting ATPase 4 from Bos taurus (Bovine).